The primary structure comprises 386 residues: Methylthioribose-1-phosphate isomerase (386 aa).

Aspartate 258 acts as the Proton donor in catalysis.

This sequence belongs to the eIF-2B alpha/beta/delta subunits family. MtnA subfamily.

The protein resides in the cytoplasm. It localises to the nucleus. It catalyses the reaction 5-(methylsulfanyl)-alpha-D-ribose 1-phosphate = 5-(methylsulfanyl)-D-ribulose 1-phosphate. Its pathway is amino-acid biosynthesis; L-methionine biosynthesis via salvage pathway; L-methionine from S-methyl-5-thio-alpha-D-ribose 1-phosphate: step 1/6. Its function is as follows. Catalyzes the interconversion of methylthioribose-1-phosphate (MTR-1-P) into methylthioribulose-1-phosphate (MTRu-1-P). The protein is Methylthioribose-1-phosphate isomerase of Postia placenta (strain ATCC 44394 / Madison 698-R) (Brown rot fungus).